Consider the following 281-residue polypeptide: NADPH-dependent 7-cyano-7-deazaguanine reductase (281 aa).

A substrate-binding site is contributed by 87–89 (VES). 89-90 (SK) is an NADPH binding site. The Thioimide intermediate role is filled by cysteine 188. Aspartate 195 (proton donor) is an active-site residue. Residue 227 to 228 (HE) participates in substrate binding. 256-257 (RG) serves as a coordination point for NADPH.

It belongs to the GTP cyclohydrolase I family. QueF type 2 subfamily. As to quaternary structure, homodimer.

The protein resides in the cytoplasm. It catalyses the reaction 7-aminomethyl-7-carbaguanine + 2 NADP(+) = 7-cyano-7-deazaguanine + 2 NADPH + 3 H(+). It functions in the pathway tRNA modification; tRNA-queuosine biosynthesis. Functionally, catalyzes the NADPH-dependent reduction of 7-cyano-7-deazaguanine (preQ0) to 7-aminomethyl-7-deazaguanine (preQ1). This is NADPH-dependent 7-cyano-7-deazaguanine reductase from Aliivibrio fischeri (strain ATCC 700601 / ES114) (Vibrio fischeri).